A 1149-amino-acid chain; its full sequence is Translocase of chloroplast 126, chloroplastic (1149 aa).

Disordered stretches follow at residues 1-206, 219-292, and 315-431; these read MDAL…GKEL, NMPN…RELT, and LELK…VNPS. Acidic residues predominate over residues 131–142; the sequence is LYYDDYGDDGEV. The segment covering 152–168 has biased composition (low complexity); that stretch reads TSSSSSSSSSECSSSAS. Composition is skewed to acidic residues over residues 271 to 280 and 335 to 357; these read YDQEGEDADS and GESD…DEHE. The segment covering 406–429 has biased composition (polar residues); that stretch reads TAATDTQSSNAASSTQVAGTTDVN. Positions 514–743 constitute an AIG1-type G domain; that stretch reads DFACTILVLG…KLQDTAAPGR (230 aa). The tract at residues 523 to 530 is G1; the sequence is GKTGVGKS. Residue 526-531 participates in GTP binding; it reads GVGKSA. S530 lines the Mg(2+) pocket. Positions 550 to 554 are G2; the sequence is STTNV. The interval 570-573 is G3; sequence DTPG. The G4 stretch occupies residues 642-645; the sequence is THAS. GTP is bound by residues H643 and 691–692; that span reads EN. The G5 stretch occupies residues 691–693; the sequence is ENH. Disordered stretches follow at residues 769 to 800 and 833 to 869; these read KLPD…LPPF and KQHR…DEAG. Residues 773–796 are compositionally biased toward acidic residues; that stretch reads EQLDESDESDDDEEDEEEGDEYDD. Composition is skewed to basic and acidic residues over residues 833–842 and 852–862; these read KQHREQLQRR and MRKEGLSHPAD. The helical transmembrane segment at 1123–1144 threads the bilayer; sequence MVLIGIVPILRSLINCRFGFGG.

Belongs to the TRAFAC class TrmE-Era-EngA-EngB-Septin-like GTPase superfamily. AIG1/Toc34/Toc159-like paraseptin GTPase family. TOC159 subfamily. In terms of assembly, part of the TOC core complex. Mg(2+) is required as a cofactor.

Its subcellular location is the plastid. It localises to the chloroplast outer membrane. Functionally, GTPase involved in protein precursor import into chloroplasts. Seems to recognize chloroplast-destined precursor proteins and regulate their presentation to the translocation channel through GTP hydrolysis. Probably specialized in the import of nuclear encoded non-photosynthetic preproteins from the cytoplasm to the chloroplast. In Physcomitrium patens (Spreading-leaved earth moss), this protein is Translocase of chloroplast 126, chloroplastic.